The primary structure comprises 284 residues: L-ribulose-5-phosphate 3-epimerase UlaE (284 aa).

This sequence belongs to the L-ribulose-5-phosphate 3-epimerase family.

It carries out the reaction L-ribulose 5-phosphate = L-xylulose 5-phosphate. It functions in the pathway cofactor degradation; L-ascorbate degradation; D-xylulose 5-phosphate from L-ascorbate: step 3/4. Functionally, catalyzes the isomerization of L-xylulose-5-phosphate to L-ribulose-5-phosphate. Is involved in the anaerobic L-ascorbate utilization. The polypeptide is L-ribulose-5-phosphate 3-epimerase UlaE (Shigella flexneri).